The sequence spans 387 residues: 8-amino-7-oxononanoate synthase (387 aa).

Substrate is bound at residue Arg-19. Gly-106 to Tyr-107 lines the pyridoxal 5'-phosphate pocket. A substrate-binding site is contributed by His-131. Pyridoxal 5'-phosphate-binding residues include Ser-177, His-205, and Thr-236. Lys-239 bears the N6-(pyridoxal phosphate)lysine mark. Position 353 (Thr-353) interacts with substrate.

Belongs to the class-II pyridoxal-phosphate-dependent aminotransferase family. BioF subfamily. In terms of assembly, homodimer. It depends on pyridoxal 5'-phosphate as a cofactor.

It carries out the reaction 6-carboxyhexanoyl-[ACP] + L-alanine + H(+) = (8S)-8-amino-7-oxononanoate + holo-[ACP] + CO2. It participates in cofactor biosynthesis; biotin biosynthesis. Its function is as follows. Catalyzes the decarboxylative condensation of pimeloyl-[acyl-carrier protein] and L-alanine to produce 8-amino-7-oxononanoate (AON), [acyl-carrier protein], and carbon dioxide. This Nitrosomonas europaea (strain ATCC 19718 / CIP 103999 / KCTC 2705 / NBRC 14298) protein is 8-amino-7-oxononanoate synthase.